The sequence spans 272 residues: Glutamate racemase (272 aa).

Substrate contacts are provided by residues 9 to 10 (DS) and 41 to 42 (YG). Residue C73 is the Proton donor/acceptor of the active site. 74 to 75 (NT) serves as a coordination point for substrate. The active-site Proton donor/acceptor is the C183. 184–185 (TH) provides a ligand contact to substrate.

This sequence belongs to the aspartate/glutamate racemases family.

It carries out the reaction L-glutamate = D-glutamate. It participates in cell wall biogenesis; peptidoglycan biosynthesis. Provides the (R)-glutamate required for cell wall biosynthesis. This Shewanella sp. (strain MR-4) protein is Glutamate racemase.